The chain runs to 454 residues: N-myc 2 proto-oncogene protein (454 aa).

Disordered stretches follow at residues 132 to 166 (SEKM…HSGT), 230 to 269 (VAAP…DEEE), and 325 to 374 (PSPY…VRRR). Residues 151-161 (PGAGAASPAGR) are compositionally biased toward low complexity. A compositionally biased stretch (acidic residues) spans 256-269 (ALSDEVDEEEDEEE). Over residues 363 to 374 (RKSDSEDSVRRR) the composition is skewed to basic and acidic residues. Residues 371 to 423 (VRRRNHNILERQRRNDLRSSFTTLRDHVPELVKNEKAAKVVILKKACEYVHYL) form the bHLH domain. A leucine-zipper region spans residues 423-444 (LQAKEHQLLMEKEKLQARQQQL).

Efficient DNA binding requires dimerization with another bHLH protein.

It is found in the nucleus. This Marmota monax (Woodchuck) protein is N-myc 2 proto-oncogene protein (N-MYC2).